The chain runs to 321 residues: UDP-N-acetylenolpyruvoylglucosamine reductase (321 aa).

In terms of domain architecture, FAD-binding PCMH-type spans phenylalanine 36–glutamate 203. Residue arginine 183 is part of the active site. The active-site Proton donor is the serine 232. The active site involves glutamate 302.

The protein belongs to the MurB family. The cofactor is FAD.

It localises to the cytoplasm. The enzyme catalyses UDP-N-acetyl-alpha-D-muramate + NADP(+) = UDP-N-acetyl-3-O-(1-carboxyvinyl)-alpha-D-glucosamine + NADPH + H(+). Its pathway is cell wall biogenesis; peptidoglycan biosynthesis. In terms of biological role, cell wall formation. This is UDP-N-acetylenolpyruvoylglucosamine reductase from Agrobacterium fabrum (strain C58 / ATCC 33970) (Agrobacterium tumefaciens (strain C58)).